The chain runs to 142 residues: Small ribosomal subunit protein uS12 (142 aa).

It belongs to the universal ribosomal protein uS12 family. As to quaternary structure, part of the 30S ribosomal subunit.

Functionally, with S4 and S5 plays an important role in translational accuracy. Located at the interface of the 30S and 50S subunits. In Thermoplasma acidophilum (strain ATCC 25905 / DSM 1728 / JCM 9062 / NBRC 15155 / AMRC-C165), this protein is Small ribosomal subunit protein uS12.